We begin with the raw amino-acid sequence, 106 residues long: Small ribosomal subunit protein uS10 (106 aa).

Belongs to the universal ribosomal protein uS10 family. Part of the 30S ribosomal subunit.

Its function is as follows. Involved in the binding of tRNA to the ribosomes. In Archaeoglobus fulgidus (strain ATCC 49558 / DSM 4304 / JCM 9628 / NBRC 100126 / VC-16), this protein is Small ribosomal subunit protein uS10.